Reading from the N-terminus, the 269-residue chain is 2-dehydro-3-deoxyphosphooctonate aldolase (269 aa).

This sequence belongs to the KdsA family.

It is found in the cytoplasm. The catalysed reaction is D-arabinose 5-phosphate + phosphoenolpyruvate + H2O = 3-deoxy-alpha-D-manno-2-octulosonate-8-phosphate + phosphate. The protein operates within carbohydrate biosynthesis; 3-deoxy-D-manno-octulosonate biosynthesis; 3-deoxy-D-manno-octulosonate from D-ribulose 5-phosphate: step 2/3. Its pathway is bacterial outer membrane biogenesis; lipopolysaccharide biosynthesis. This chain is 2-dehydro-3-deoxyphosphooctonate aldolase, found in Chlamydia caviae (strain ATCC VR-813 / DSM 19441 / 03DC25 / GPIC) (Chlamydophila caviae).